Reading from the N-terminus, the 515-residue chain is Histidine ammonia-lyase (515 aa).

The 5-imidazolinone (Ala-Gly) cross-link spans 145-147 (ASG). Position 146 is a 2,3-didehydroalanine (Ser) (S146).

The protein belongs to the PAL/histidase family. In terms of processing, contains an active site 4-methylidene-imidazol-5-one (MIO), which is formed autocatalytically by cyclization and dehydration of residues Ala-Ser-Gly.

It is found in the cytoplasm. The enzyme catalyses L-histidine = trans-urocanate + NH4(+). It participates in amino-acid degradation; L-histidine degradation into L-glutamate; N-formimidoyl-L-glutamate from L-histidine: step 1/3. The polypeptide is Histidine ammonia-lyase (Gluconacetobacter diazotrophicus (strain ATCC 49037 / DSM 5601 / CCUG 37298 / CIP 103539 / LMG 7603 / PAl5)).